The primary structure comprises 344 residues: Dihydroorotase (344 aa).

Histidine 14 and histidine 16 together coordinate Zn(2+). Substrate contacts are provided by residues 16–18 (HLR) and asparagine 42. Lysine 100, histidine 137, and histidine 175 together coordinate Zn(2+). Lysine 100 is subject to N6-carboxylysine. Histidine 137 contributes to the substrate binding site. Leucine 220 lines the substrate pocket. Aspartate 248 contributes to the Zn(2+) binding site. Residue aspartate 248 is part of the active site. Substrate-binding residues include histidine 252 and alanine 264.

It belongs to the metallo-dependent hydrolases superfamily. DHOase family. Class II DHOase subfamily. In terms of assembly, homodimer. Zn(2+) is required as a cofactor.

It carries out the reaction (S)-dihydroorotate + H2O = N-carbamoyl-L-aspartate + H(+). It functions in the pathway pyrimidine metabolism; UMP biosynthesis via de novo pathway; (S)-dihydroorotate from bicarbonate: step 3/3. In terms of biological role, catalyzes the reversible cyclization of carbamoyl aspartate to dihydroorotate. The protein is Dihydroorotase of Cupriavidus metallidurans (strain ATCC 43123 / DSM 2839 / NBRC 102507 / CH34) (Ralstonia metallidurans).